Reading from the N-terminus, the 300-residue chain is Mycothiol acetyltransferase (300 aa).

2 consecutive N-acetyltransferase domains span residues 4 to 140 (IDWR…RPLT) and 151 to 300 (VRLA…AVAD). Asp36 provides a ligand contact to 1D-myo-inositol 2-(L-cysteinylamino)-2-deoxy-alpha-D-glucopyranoside. 79-81 (LVV) lines the acetyl-CoA pocket. Glu178, Lys219, and Glu227 together coordinate 1D-myo-inositol 2-(L-cysteinylamino)-2-deoxy-alpha-D-glucopyranoside. An acetyl-CoA-binding site is contributed by 231–233 (VGV). Residue Tyr269 participates in 1D-myo-inositol 2-(L-cysteinylamino)-2-deoxy-alpha-D-glucopyranoside binding. 274–279 (NGAAVK) is an acetyl-CoA binding site.

This sequence belongs to the acetyltransferase family. MshD subfamily. In terms of assembly, monomer.

It carries out the reaction 1D-myo-inositol 2-(L-cysteinylamino)-2-deoxy-alpha-D-glucopyranoside + acetyl-CoA = mycothiol + CoA + H(+). Catalyzes the transfer of acetyl from acetyl-CoA to desacetylmycothiol (Cys-GlcN-Ins) to form mycothiol. The protein is Mycothiol acetyltransferase of Mycobacterium sp. (strain JLS).